The sequence spans 325 residues: Exogastrula-inducing polypeptide (325 aa).

A signal peptide spans 1 to 19 (MKVSLVLLIAVFGLAMVAA). A propeptide spanning residues 20-45 (EETLESKLQMALKSLLQENEELNLEG) is cleaved from the precursor. EGF-like domains follow at residues 48–91 (TKGG…SSCY) and 107–154 (TVAR…GGCS). Disulfide bonds link Cys52/Cys65, Cys59/Cys75, Cys77/Cys90, Cys111/Cys124, Cys118/Cys138, and Cys140/Cys153. Residues 160–177 (ELEYLSYVARDVEMEMLA) constitute a propeptide that is removed on maturation. Residues 180-226 (SVYQCNRDTNSCDGFGKCEKSTFGRTTGQYICNCDDGYRNNAYGGCS) form the EGF-like 3 domain. 3 cysteine pairs are disulfide-bonded: Cys184–Cys197, Cys191–Cys211, and Cys213–Cys225. The propeptide occupies 232-249 (EIEYLSMIARDQELEMQA). One can recognise an EGF-like 4 domain in the interval 252-298 (SLPQCNRDTNYCDGFGQCVKSTFGRTTGQYICSCNDGYENNLYGGCS). 3 disulfides stabilise this stretch: Cys256–Cys269, Cys263–Cys283, and Cys285–Cys297. Positions 313 to 325 (MEILRSLANLLEE) are excised as a propeptide.

It localises to the secreted. The protein resides in the extracellular space. It is found in the extracellular matrix. Its function is as follows. The EGIP peptides are factors effective to extrude the archenteron toward outside of embryos. May have a role in the induction of gastrulation. In Heliocidaris crassispina (Sea urchin), this protein is Exogastrula-inducing polypeptide.